The following is a 338-amino-acid chain: Cytochrome c biogenesis protein CcsA (338 aa).

Helical transmembrane passes span 11 to 31 (VLLD…YWLA), 39 to 59 (LLHE…TGLL), 76 to 96 (ESLF…EAFA), 100 to 120 (LVGV…SLTL), 145 to 165 (VMIL…AFLI), 244 to 264 (LIGL…VWAN), 278 to 295 (TWSL…HARI), and 305 to 325 (ATLA…VNFL).

It belongs to the CcmF/CycK/Ccl1/NrfE/CcsA family. As to quaternary structure, may interact with ccs1.

It is found in the cell inner membrane. Required during biogenesis of c-type cytochromes (cytochrome c6 and cytochrome f) at the step of heme attachment. This is Cytochrome c biogenesis protein CcsA from Gloeobacter violaceus (strain ATCC 29082 / PCC 7421).